A 4144-amino-acid polypeptide reads, in one-letter code: DNA-dependent protein kinase catalytic subunit (4144 aa).

N6-acetyllysine is present on Lys-127. An HEAT 1 repeat occupies 298-333; it reads DNYVSLFEVLSKWCSHTNVEMKKAAHSALESFLKQV. Residues Ser-521, Ser-851, and Ser-903 each carry the phosphoserine modification. One copy of the HEAT 2 repeat lies at 1014-1050; the sequence is QDTVALLETILDGIVDPVDSTLRDFCGRCIREFLKWS. Ser-1075 carries the phosphoserine modification. Lys-1219 is modified (N6-acetyllysine). Residues 1516-1551 form an interaction with C1D region; it reads LDPSCKRLASGLLELAFAFGGLCEHLVDLLLDTAVL. The interval 1516–1551 is leucine-zipper; sequence LDPSCKRLASGLLELAFAFGGLCEHLVDLLLDTAVL. The TPR 1 repeat unit spans residues 1736–1769; it reads PMKSEEFPVGTLRYSNYVDCMKKFLDALELSQSP. Position 1983 is an N6-acetyllysine (Lys-1983). Phosphoserine; by autocatalysis is present on Ser-2069. Residue Lys-2271 is modified to N6-acetyllysine. Positions 2448–3228 are KIP-binding; the sequence is LDIIYKMMAK…DHSLSMDEER (781 aa). Thr-2547 carries the post-translational modification Phosphothreonine. The residue at position 2621 (Thr-2621) is a Phosphothreonine; by autocatalysis. Phosphoserine; by autocatalysis is present on Ser-2624. Phosphothreonine; by autocatalysis occurs at positions 2650 and 2659. Positions 2697 to 2729 are disordered; sequence AQKRNEKSQRAPLKSVGPDFGEKKLGLPGDKVD. Basic and acidic residues predominate over residues 2716–2729; that stretch reads FGEKKLGLPGDKVD. Residues 2753–2781 form a may split the end of the DNA molecule, with the two strands separating around the region region; that stretch reads EKLSLIYARKGIAEQKREKEIKSELKMKH. At Ser-2805 the chain carries Phosphoserine. 3 TPR repeats span residues 2903–2935, 2936–2964, and 2965–2998; these read PVGV…VSPD, VVRW…SEIG, and TKQI…EEWV. Residues 2922-3555 enclose the FAT domain; that stretch reads PAKQFKGRMR…VYPFIISSES (634 aa). Phosphoserine is present on Ser-3221. An N6-acetyllysine mark is found at Lys-3257, Lys-3276, Lys-3654, and Lys-3658. The stretch at 3711-3748 is one TPR 5 repeat; the sequence is LRNELEIPGQYDGKGKPLPEYHARIAGFDERIKVMASI. Residues 3738–4069 form the PI3K/PI4K catalytic domain; the sequence is FDERIKVMAS…IHYAKRKLAG (332 aa). Positions 3744–3750 are G-loop; sequence VMASIRK. Ser-3747 and Ser-3837 each carry phosphoserine. The tract at residues 3935-3943 is catalytic loop; sequence GIGDRHLNN. An activation loop region spans residues 3955 to 3980; it reads GIDFGHAFGSATQFLPVPELMPFRLT. A Phosphoserine modification is found at Ser-4042. An FATC domain is found at 4112–4144; it reads NGLSEEAQVKCLIDQATDPNILGRTWIGWEPWM.

Belongs to the PI3/PI4-kinase family. In terms of assembly, DNA-PK is a heterotrimer of PRKDC and the Ku dimer (composed of XRCC6/Ku70 and XRCC5/Ku86). Formation of this complex may be promoted by interaction with ILF3. Component of the core long-range non-homologous end joining (NHEJ) complex (also named DNA-PK complex) composed of PRKDC, LIG4, XRCC4, XRCC6/Ku70, XRCC5/Ku86 and NHEJ1/XLF. Additional component of the NHEJ complex includes PAXX. Following autophosphorylation, PRKDC dissociates from DNA. Interacts with DNA-PKcs-interacting protein (KIP) with the region upstream the kinase domain. PRKDC alone also interacts with and phosphorylates DCLRE1C, thereby activating the latent endonuclease activity of this protein. Interacts with C1D. Interacts with TTI1 and TELO2. Interacts with CIB1. Interacts with SETX. Interacts with NR4A3; the DNA-dependent protein kinase complex DNA-PK phosphorylates and activates NR4A3 and prevents NR4A3 ubiquitination and degradation. Interacts with BRAT1. Part of the HDP-RNP complex composed of at least HEXIM1, PRKDC, XRCC5, XRCC6, paraspeckle proteins (SFPQ, NONO, PSPC1, RBM14, and MATR3) and NEAT1 RNA. Interacts with KAT5. Post-translationally, autophosphorylated at two clusters, the T2609 cluster and the S2056 cluster. Autophosphorylated on Ser-2069, Thr-2621, Thr-2650 and Thr-2659. Ser-2069 and Thr-2621 are DNA damage-inducible phosphorylation sites (inducible with ionizing radiation, IR) dephosphorylated by PPP5C. Autophosphorylation induces a conformational change that leads to remodeling of the DNA-PK complex, requisite for efficient end processing and DNA repair. Autophosphorylation in trans within DNA-PK complexes loaded on DNA ends leads to the dissociation of PRKDC from DNA and the transition into the short-range NHEJ complex. Autophosphorylation of the T2609 cluster is required for hematopoietic development and protein synthesis in erythrocytes precursors. S-nitrosylated by GAPDH. In terms of processing, polyubiquitinated by RNF144A, leading to proteasomal degradation.

The protein localises to the nucleus. It localises to the nucleolus. The protein resides in the cytoplasm. It is found in the cytosol. It carries out the reaction L-seryl-[protein] + ATP = O-phospho-L-seryl-[protein] + ADP + H(+). It catalyses the reaction L-threonyl-[protein] + ATP = O-phospho-L-threonyl-[protein] + ADP + H(+). Activity seems to be attenuated by autophosphorylation. Binding to the SL1 region of U3 small nucleolar RNA promotes auto-phosphorylation activity. Inhibited by wortmannin. Serine/threonine-protein kinase that acts as a molecular sensor for DNA damage. Involved in DNA non-homologous end joining (NHEJ) required for double-strand break (DSB) repair and V(D)J recombination. Must be bound to DNA to express its catalytic properties. Promotes processing of hairpin DNA structures in V(D)J recombination by activation of the hairpin endonuclease artemis (DCLRE1C). Recruited by XRCC5 and XRCC6 to DNA ends and is required to (1) protect and align broken ends of DNA, thereby preventing their degradation, (2) and sequester the DSB for repair by NHEJ. Acts as a scaffold protein to aid the localization of DNA repair proteins to the site of damage. The assembly of the DNA-PK complex at DNA ends is also required for the NHEJ ligation step. Found at the ends of chromosomes, suggesting a further role in the maintenance of telomeric stability and the prevention of chromosomal end fusion. Also involved in modulation of transcription. As part of the DNA-PK complex, involved in the early steps of ribosome assembly by promoting the processing of precursor rRNA into mature 18S rRNA in the small-subunit processome. Binding to U3 small nucleolar RNA, recruits PRKDC and XRCC5/Ku86 to the small-subunit processome. Recognizes the substrate consensus sequence [ST]-Q. Phosphorylates 'Ser-139' of histone variant H2AX, thereby regulating DNA damage response mechanism. Phosphorylates ASF1A, DCLRE1C, c-Abl/ABL1, histone H1, HSPCA, c-jun/JUN, p53/TP53, PARP1, POU2F1, DHX9, FH, SRF, NHEJ1/XLF, XRCC1, XRCC4, XRCC5, XRCC6, WRN, MYC and RFA2. Can phosphorylate C1D not only in the presence of linear DNA but also in the presence of supercoiled DNA. Ability to phosphorylate p53/TP53 in the presence of supercoiled DNA is dependent on C1D. Acts as a regulator of the phosphatidylinositol 3-kinase/protein kinase B signal transduction by mediating phosphorylation of 'Ser-473' of protein kinase B (PKB/AKT1, PKB/AKT2, PKB/AKT3), promoting their activation. Contributes to the determination of the circadian period length by antagonizing phosphorylation of CRY1 'Ser-588' and increasing CRY1 protein stability, most likely through an indirect mechanism. Plays a role in the regulation of DNA virus-mediated innate immune response by assembling into the HDP-RNP complex, a complex that serves as a platform for IRF3 phosphorylation and subsequent innate immune response activation through the cGAS-STING pathway. Also regulates the cGAS-STING pathway by catalyzing phosphorylation of CGAS, thereby impairing CGAS oligomerization and activation. Also regulates the cGAS-STING pathway by mediating phosphorylation of PARP1. This chain is DNA-dependent protein kinase catalytic subunit (PRKDC), found in Canis lupus familiaris (Dog).